The sequence spans 294 residues: ATP phosphoribosyltransferase (294 aa).

This sequence belongs to the ATP phosphoribosyltransferase family. Long subfamily. It depends on Mg(2+) as a cofactor.

Its subcellular location is the cytoplasm. The enzyme catalyses 1-(5-phospho-beta-D-ribosyl)-ATP + diphosphate = 5-phospho-alpha-D-ribose 1-diphosphate + ATP. The protein operates within amino-acid biosynthesis; L-histidine biosynthesis; L-histidine from 5-phospho-alpha-D-ribose 1-diphosphate: step 1/9. Feedback inhibited by histidine. Its function is as follows. Catalyzes the condensation of ATP and 5-phosphoribose 1-diphosphate to form N'-(5'-phosphoribosyl)-ATP (PR-ATP). Has a crucial role in the pathway because the rate of histidine biosynthesis seems to be controlled primarily by regulation of HisG enzymatic activity. This Chlorobium phaeovibrioides (strain DSM 265 / 1930) (Prosthecochloris vibrioformis (strain DSM 265)) protein is ATP phosphoribosyltransferase.